A 130-amino-acid chain; its full sequence is Fumarate reductase subunit C (130 aa).

Helical transmembrane passes span 37 to 57 (VWFS…PAGW), 60 to 80 (FVGF…LLAA), and 109 to 129 (VIKA…AVAL).

This sequence belongs to the FrdC family. In terms of assembly, part of an enzyme complex containing four subunits: a flavoprotein (FrdA), an iron-sulfur protein (FrdB), and two hydrophobic anchor proteins (FrdC and FrdD).

The protein resides in the cell inner membrane. In terms of biological role, two distinct, membrane-bound, FAD-containing enzymes are responsible for the catalysis of fumarate and succinate interconversion; fumarate reductase is used in anaerobic growth, and succinate dehydrogenase is used in aerobic growth. Anchors the catalytic components of the fumarate reductase complex to the cell inner membrane, binds quinones. The sequence is that of Fumarate reductase subunit C from Yersinia enterocolitica serotype O:8 / biotype 1B (strain NCTC 13174 / 8081).